A 98-amino-acid polypeptide reads, in one-letter code: MMSINLNLIMAFSLALAGVLIYRTHLMSTLLCLEGMMLSLFILMALLISHFHMFSVSMAPLVLLVFSACEAGVGLALLVKTSSDYGNDYVQNLNLLQW.

A run of 3 helical transmembrane segments spans residues 1-21 (MMSINLNLIMAFSLALAGVLI), 28-48 (STLLCLEGMMLSLFILMALLI), and 59-79 (APLVLLVFSACEAGVGLALLV).

It belongs to the complex I subunit 4L family. As to quaternary structure, core subunit of respiratory chain NADH dehydrogenase (Complex I) which is composed of 45 different subunits.

It localises to the mitochondrion inner membrane. The enzyme catalyses a ubiquinone + NADH + 5 H(+)(in) = a ubiquinol + NAD(+) + 4 H(+)(out). Core subunit of the mitochondrial membrane respiratory chain NADH dehydrogenase (Complex I) which catalyzes electron transfer from NADH through the respiratory chain, using ubiquinone as an electron acceptor. Part of the enzyme membrane arm which is embedded in the lipid bilayer and involved in proton translocation. This chain is NADH-ubiquinone oxidoreductase chain 4L (MT-ND4L), found in Pseudocheirus peregrinus (Common ring-tailed possum).